A 475-amino-acid polypeptide reads, in one-letter code: Ribosomal protein uS12 methylthiotransferase RimO (475 aa).

An MTTase N-terminal domain is found at 5 to 114 (RTVRLIRLGC…IAQRLEDVLA (110 aa)). C14, C49, C78, C174, C178, and C181 together coordinate [4Fe-4S] cluster. One can recognise a Radical SAM core domain in the interval 160-390 (LDDSPVAPLK…AGIAEEVTAD (231 aa)). The 69-residue stretch at 393-461 (RARLGETVDV…GVDFLAAPVT (69 aa)) folds into the TRAM domain.

Belongs to the methylthiotransferase family. RimO subfamily. It depends on [4Fe-4S] cluster as a cofactor.

The protein localises to the cytoplasm. The enzyme catalyses L-aspartate(89)-[ribosomal protein uS12]-hydrogen + (sulfur carrier)-SH + AH2 + 2 S-adenosyl-L-methionine = 3-methylsulfanyl-L-aspartate(89)-[ribosomal protein uS12]-hydrogen + (sulfur carrier)-H + 5'-deoxyadenosine + L-methionine + A + S-adenosyl-L-homocysteine + 2 H(+). Its function is as follows. Catalyzes the methylthiolation of an aspartic acid residue of ribosomal protein uS12. This is Ribosomal protein uS12 methylthiotransferase RimO from Acidothermus cellulolyticus (strain ATCC 43068 / DSM 8971 / 11B).